Here is a 1343-residue protein sequence, read N- to C-terminus: MVYSYSEKKRIRKDFGKRPQVLDIPYLLSIQLDSFKKFTDQDPTGERGFEAAFRSVFPIKSFSGNSELQYVSYKLGEPVFDVKECQIRGVTYSAPLRVKLRMVLYDREAAPGTVKDIKEQEVYMGDIPLMTENGTFVINGTERVIVSQLHRSPGVFFDHDRGKTHSSGKVLYNARIIPYRGSWLDFEFDPKDALFVRIDRRRKLAASIILRALDYSTQDILDLFFDRVNFKIKKDSLVMDLVAERLRGETASYDIKDVEGTIIVEKGRRITARHIRQLEKSNTTELEVPVDYIVGKISGQDYIDPDTGEVLVSANAEMTLEDLAKLSLAGIKEISTLYINELDNGAYMSDTLRIDSTTNRLEALVEIYRMMRPGEPPTKDAAEALFQNLFFSEERYDLSKVGRMKFNRRLGIDDDEGTGILSKEDIVAVMKNIITIRNGNDEVDDIDHLGNRRIRSVGEMAENQFRVGLVRVERAVRERLSLGDLNELMPQDLINAKPISAAVKEFFGSSQLSQFMDQNNPLSEVTHKRRISALGPGGLTRERAGFEVRDVHPTHYGRLCPIETPEGPNIGLINSLASFARTNSYGFLETPYRKVIDGVVTDQVDYLSAIEEGRYVIAQAIVDLDENGRMMDELIACRHKGDSTFMGAADIQYMDVSPQQIISVAASLIPFLEHDDANRALMGANMQRQAVPTLKADKPLVGTGIERTLAVDSGVVVVAKRGGYIDYVDASRIVVKVNESELRPGEAGIDIYNLTKYTRSNQNTCINQRPCCAMGDPVVTGDVLADGPSTDLGDLALGQNMRIAFMPWNGYNFEDSILISERVAQEDRFTTIHIQELSCIARDTKLGSEEITADIPNVGESALSKLDESGIVYIGAEVKGGDILVGKVTPKGETQLTPEEKLLRAIFGEKASDVKDSSLRVPNSVKGTIIDVQVFTRDGVEKDKRAVEIEEMHVRQAKKDLTEEFQILEEGVYGRARNLLLSAGFNEAQLDAIPRSQLLSQSIDDEGKQTELEQLAEQHDELKADFDKKFEVKRRKITQGDDLAPGVLKIVKVYLAVKRTIQPGDKMAGRHGNKGVISKINPVEDMPYDENGNPIDIVLNPLGVPSRMNIGQVLEVHLGAAAKGIGDKIAAMLEEQRELAELRGYIKEVYELGEEVQQRVDIDSFTDDEVVRLAKNLKGGIPTATPAFDGAKEKEIKEMLALAGLPTTGQRKLFDGRTGDEFERQVTVGYMYMLKLNHLVDDKMHARSTGSYSLVTQQPLGGKAQFGGQRFGEMEVWALEAYGAAYTLQEMLTVKSDDVNGRTNMYKNIVDGNHQMQPGMPESFNVLLKEIRSLGINIELDQD.

It belongs to the RNA polymerase beta chain family. The RNAP catalytic core consists of 2 alpha, 1 beta, 1 beta' and 1 omega subunit. When a sigma factor is associated with the core the holoenzyme is formed, which can initiate transcription.

The enzyme catalyses RNA(n) + a ribonucleoside 5'-triphosphate = RNA(n+1) + diphosphate. In terms of biological role, DNA-dependent RNA polymerase catalyzes the transcription of DNA into RNA using the four ribonucleoside triphosphates as substrates. In Shewanella woodyi (strain ATCC 51908 / MS32), this protein is DNA-directed RNA polymerase subunit beta.